A 121-amino-acid polypeptide reads, in one-letter code: uncharacterized protein (121 aa).

2 disordered regions span residues 1-41 (MRRQ…QESR) and 94-121 (GGTI…GLRR). Polar residues predominate over residues 98-108 (SGQQSRNSSLP).

Predominantly expressed in tissues containing motile cilia. Also expressed in non-motile ciliated adult olfactory bulbs.

Its subcellular location is the cytoplasm. The protein resides in the cytoskeleton. It localises to the cilium basal body. This is an uncharacterized protein from Mus musculus (Mouse).